Here is a 460-residue protein sequence, read N- to C-terminus: Bifunctional protein GlmU (460 aa).

The interval 1 to 229 (MTNYAIILAA…FNESLGVNDR (229 aa)) is pyrophosphorylase. UDP-N-acetyl-alpha-D-glucosamine-binding positions include 8 to 11 (LAAG), lysine 22, glutamine 72, and 77 to 78 (GT). Aspartate 102 is a binding site for Mg(2+). The UDP-N-acetyl-alpha-D-glucosamine site is built by glycine 139, glutamate 154, asparagine 169, and asparagine 227. A Mg(2+)-binding site is contributed by asparagine 227. The segment at 230 to 250 (VALATAETVMRQRITQKHMVN) is linker. Positions 251 to 460 (GVTFHNPETV…RLAHHPSRSK (210 aa)) are N-acetyltransferase. UDP-N-acetyl-alpha-D-glucosamine contacts are provided by arginine 332 and lysine 350. Histidine 362 serves as the catalytic Proton acceptor. Residues tyrosine 365 and asparagine 376 each contribute to the UDP-N-acetyl-alpha-D-glucosamine site. Acetyl-CoA-binding positions include alanine 379, 385 to 386 (NY), serine 404, alanine 422, and arginine 439.

In the N-terminal section; belongs to the N-acetylglucosamine-1-phosphate uridyltransferase family. The protein in the C-terminal section; belongs to the transferase hexapeptide repeat family. As to quaternary structure, homotrimer. The cofactor is Mg(2+).

It localises to the cytoplasm. The catalysed reaction is alpha-D-glucosamine 1-phosphate + acetyl-CoA = N-acetyl-alpha-D-glucosamine 1-phosphate + CoA + H(+). It carries out the reaction N-acetyl-alpha-D-glucosamine 1-phosphate + UTP + H(+) = UDP-N-acetyl-alpha-D-glucosamine + diphosphate. It participates in nucleotide-sugar biosynthesis; UDP-N-acetyl-alpha-D-glucosamine biosynthesis; N-acetyl-alpha-D-glucosamine 1-phosphate from alpha-D-glucosamine 6-phosphate (route II): step 2/2. Its pathway is nucleotide-sugar biosynthesis; UDP-N-acetyl-alpha-D-glucosamine biosynthesis; UDP-N-acetyl-alpha-D-glucosamine from N-acetyl-alpha-D-glucosamine 1-phosphate: step 1/1. The protein operates within bacterial outer membrane biogenesis; LPS lipid A biosynthesis. Catalyzes the last two sequential reactions in the de novo biosynthetic pathway for UDP-N-acetylglucosamine (UDP-GlcNAc). The C-terminal domain catalyzes the transfer of acetyl group from acetyl coenzyme A to glucosamine-1-phosphate (GlcN-1-P) to produce N-acetylglucosamine-1-phosphate (GlcNAc-1-P), which is converted into UDP-GlcNAc by the transfer of uridine 5-monophosphate (from uridine 5-triphosphate), a reaction catalyzed by the N-terminal domain. In Streptococcus pyogenes serotype M49 (strain NZ131), this protein is Bifunctional protein GlmU.